Reading from the N-terminus, the 872-residue chain is DNA mismatch repair protein MutS (872 aa).

626 to 633 contacts ATP; the sequence is GPNMAGKS.

The protein belongs to the DNA mismatch repair MutS family.

Functionally, this protein is involved in the repair of mismatches in DNA. It is possible that it carries out the mismatch recognition step. This protein has a weak ATPase activity. This is DNA mismatch repair protein MutS from Chlorobium phaeobacteroides (strain DSM 266 / SMG 266 / 2430).